Reading from the N-terminus, the 160-residue chain is Cytochrome b6-f complex subunit 4 (160 aa).

Transmembrane regions (helical) follow at residues 36-56 (LLYIFPVVILGTIACNVGLAI), 95-115 (LLGVLLMASVPLGLFTVPFLE), and 131-151 (TVFLIGTAVALWLGIGATLPI).

It belongs to the cytochrome b family. PetD subfamily. In terms of assembly, the 4 large subunits of the cytochrome b6-f complex are cytochrome b6, subunit IV (17 kDa polypeptide, petD), cytochrome f and the Rieske protein, while the 4 small subunits are petG, petL, petM and petN. The complex functions as a dimer.

The protein localises to the plastid. The protein resides in the chloroplast thylakoid membrane. Component of the cytochrome b6-f complex, which mediates electron transfer between photosystem II (PSII) and photosystem I (PSI), cyclic electron flow around PSI, and state transitions. This chain is Cytochrome b6-f complex subunit 4, found in Acorus calamus (Sweet flag).